The following is a 357-amino-acid chain: DNA replication and repair protein RecF (357 aa).

Residue 30 to 37 (GANGSGKT) participates in ATP binding.

The protein belongs to the RecF family.

The protein resides in the cytoplasm. In terms of biological role, the RecF protein is involved in DNA metabolism; it is required for DNA replication and normal SOS inducibility. RecF binds preferentially to single-stranded, linear DNA. It also seems to bind ATP. This chain is DNA replication and repair protein RecF, found in Shigella flexneri serotype 5b (strain 8401).